The chain runs to 1241 residues: MIHPVQVGKRTRMSFSKLDEIGVMPNLIEVQLDSYQWFLDNGLQEIFDDINPIQDYTGNLILEFIGYKLDMDNIKYSVEECKERDTTYAAPLKVKVRLLNKETGEVKEQEVFMGDFPLMTEQGTFIINGAERVIVSQLVRSPGAYYDYIVDKNGKKLFSATVIPNRGAWLEYETDSNSVIHVRIDKTRKLPITILVRAMGFGSDAEIVNYFGEEERLKATIEKDNTKTREEALLEIYKRLRPGEPPTVDSAFSLINSLFFDPKRYDLSRVGRYKFNKKLAVSIRIANKTAAKDIVNPETGEIIVEKGQRISKEKALEIQNSGINSVDISVDDNIIRVIGNNFVDIKSYIKFDISDLNIRELVYYPVLKEILENYTDEEAIKEQLKKNVHKLVPKHIIKDDMFATVSYELGLAYGIGNVDDIDHLGNRRVRSVGELLQNQFRIGLSRMERVVKERMTIQDQEVITPQALINIRPVAASIKEFFGSSQLSQFMDQINPLSELTHKRRLSALGPGGLSRERAGFEVRDVHHSHYGRMCPIETPEGPNIGLINSLATYAKVNEYGFVETPYRTVDKEQGRVTDEIHYITADEEDRCLIARANEALDENGYFIDKKITVRAPDEVLVVPANEVDLMDVSARQMVSVATAMIPFLENDDASRALMGSNMQRQAVPLLKPQAPVVGTGIEHKAAVDSGILPKARNAGVVEYVSANEVRVRRDSDGGVDTYRLLKFKRSNQGTCINQRPIVEKNEKVEKGTVLADGQSTDLGEIALGRNIRMGFITWEGYNYEDAMLISEQLVRDDVFTSIHIEEYEAEARDTKLGPEEITRDIPNVGEDALKDIDERGIIRIGAEVRSGDILVGKVTPKGETELTAEERLLRAIFGEKAREVRDTSLRVPHGEAGIIVDVKIFTRENGDELPPGVNELVRCYIAQKRKISVGDKMSGRHGNKGVISRVLPEEDMPFLPDGRPLQICLNPLGVPSRMNIGQVLEVHLGWAAANLGWHIATPVFDGALEPEIVECLKRAGYAEDGKTVLYDGRTGEAFDNRVTVGYMYILKLAHLVDDKIHARSTGPYSLVTQQPLGGKAQFGGQRFGEMEVWALEAYGAAHTLQEILTVKSDDVVGRVKTYEAIVKGENIPEPGIPEAFKVLIKELQALCLDVKVLSDNNNEIELKESIEDETEDLDVNIEGNEDSKVEPIRPQDVQENVSGENVDAGYENEDVDIDYEDLDIDDLKNGLGLEDFNDEH.

Residues 1195 to 1219 (PQDVQENVSGENVDAGYENEDVDID) form a disordered region.

The protein belongs to the RNA polymerase beta chain family. As to quaternary structure, the RNAP catalytic core consists of 2 alpha, 1 beta, 1 beta' and 1 omega subunit. When a sigma factor is associated with the core the holoenzyme is formed, which can initiate transcription.

It catalyses the reaction RNA(n) + a ribonucleoside 5'-triphosphate = RNA(n+1) + diphosphate. Its function is as follows. DNA-dependent RNA polymerase catalyzes the transcription of DNA into RNA using the four ribonucleoside triphosphates as substrates. This chain is DNA-directed RNA polymerase subunit beta, found in Clostridium acetobutylicum (strain ATCC 824 / DSM 792 / JCM 1419 / IAM 19013 / LMG 5710 / NBRC 13948 / NRRL B-527 / VKM B-1787 / 2291 / W).